Here is a 30-residue protein sequence, read N- to C-terminus: Cytochrome b6/f complex 12.6 kDa peptide (30 aa).

Residues 1–30 (SGSGVRSAKKGGKAQGGQAGVGYKGSTEPG) form a disordered region. The span at 13-23 (KAQGGQAGVGY) shows a compositional bias: gly residues.

It localises to the plastid. The protein resides in the chloroplast. May be a component of the cytochrome b6/f complex which is part of the photosynthetic respiratory chain. The protein is Cytochrome b6/f complex 12.6 kDa peptide of Euglena gracilis.